The primary structure comprises 346 residues: Coproporphyrin III ferrochelatase (346 aa).

Positions 52 and 121 each coordinate Fe-coproporphyrin III. 2 residues coordinate Fe(2+): histidine 181 and glutamate 264.

Belongs to the ferrochelatase family.

Its subcellular location is the cytoplasm. The catalysed reaction is Fe-coproporphyrin III + 2 H(+) = coproporphyrin III + Fe(2+). It functions in the pathway porphyrin-containing compound metabolism; protoheme biosynthesis. Its function is as follows. Involved in coproporphyrin-dependent heme b biosynthesis. Catalyzes the insertion of ferrous iron into coproporphyrin III to form Fe-coproporphyrin III. This Mycobacterium sp. (strain KMS) protein is Coproporphyrin III ferrochelatase.